A 270-amino-acid chain; its full sequence is MEPSLLMWGFFTFTMIPGCMAGACVQQPPSLRNATFKILGYKVGTTLNCDCQRGFRRDPSSGPYMICRGNSSHSFWENKCQCMPTSSPRIPVKQVTPRPEEQKERKTTETQGQMQPPNQANLPGHCKEPPPWEHESLKRVYHFMEGQTVRYQCLPGFRDGSAQNNSAQSVCKKQEDQEVMRWTQPKLKCKSEKENGSFPEPQMSTAAPPTTKTSLPTRTKGTTDSQNLTEVPATMQPIIFTTQYQLAVAGCVLLLLSILLLSGLTWQRRR.

Positions 1-21 (MEPSLLMWGFFTFTMIPGCMA) are cleaved as a signal peptide. The Sushi 1 domain occupies 22-84 (GACVQQPPSL…FWENKCQCMP (63 aa)). Topologically, residues 22-245 (GACVQQPPSL…QPIIFTTQYQ (224 aa)) are extracellular. Disulfide bonds link C24–C67, C49–C80, and C51–C82. N-linked (GlcNAc...) asparagine glycosylation is found at N33 and N70. A disordered region spans residues 87-124 (SPRIPVKQVTPRPEEQKERKTTETQGQMQPPNQANLPG). Residues 98–108 (RPEEQKERKTT) are compositionally biased toward basic and acidic residues. Polar residues predominate over residues 112-121 (GQMQPPNQAN). One can recognise a Sushi 2 domain in the interval 124–191 (GHCKEPPPWE…WTQPKLKCKS (68 aa)). Intrachain disulfides connect C126-C171 and C153-C189. 2 N-linked (GlcNAc...) asparagine glycosylation sites follow: N164 and N195. A disordered region spans residues 190 to 225 (KSEKENGSFPEPQMSTAAPPTTKTSLPTRTKGTTDS). A compositionally biased stretch (polar residues) spans 202–225 (QMSTAAPPTTKTSLPTRTKGTTDS). N227 carries N-linked (GlcNAc...) asparagine glycosylation. A helical transmembrane segment spans residues 246–264 (LAVAGCVLLLLSILLLSGL). The Cytoplasmic segment spans residues 265–270 (TWQRRR).

As to quaternary structure, non-covalent dimer of an alpha and a beta subunit. IL2R exists in 3 different forms: a high affinity dimer, an intermediate affinity monomer (beta subunit), and a low affinity monomer (alpha subunit). The high and intermediate affinity forms also associate with a gamma subunit.

It localises to the membrane. In terms of biological role, receptor for interleukin-2. The receptor is involved in the regulation of immune tolerance by controlling regulatory T cells (TREGs) activity. TREGs suppress the activation and expansion of autoreactive T-cells. This Sus scrofa (Pig) protein is Interleukin-2 receptor subunit alpha (IL2RA).